Here is a 1363-residue protein sequence, read N- to C-terminus: DNA-directed RNA polymerase subunit beta (1363 aa).

This sequence belongs to the RNA polymerase beta chain family. The RNAP catalytic core consists of 2 alpha, 1 beta, 1 beta' and 1 omega subunit. When a sigma factor is associated with the core the holoenzyme is formed, which can initiate transcription.

It carries out the reaction RNA(n) + a ribonucleoside 5'-triphosphate = RNA(n+1) + diphosphate. In terms of biological role, DNA-dependent RNA polymerase catalyzes the transcription of DNA into RNA using the four ribonucleoside triphosphates as substrates. The polypeptide is DNA-directed RNA polymerase subunit beta (Neorickettsia risticii (Ehrlichia risticii)).